Here is a 380-residue protein sequence, read N- to C-terminus: O-methyltransferase ucdC (380 aa).

Residues 222–223 (GG), aspartate 247, and arginine 283 contribute to the S-adenosyl-L-methionine site. The active-site Proton acceptor is histidine 287.

This sequence belongs to the class I-like SAM-binding methyltransferase superfamily. Cation-independent O-methyltransferase family. COMT subfamily.

Its pathway is secondary metabolite biosynthesis. Its function is as follows. Nonribosomal peptide synthetase that mediates the biosynthesis of usterphenyllins and uscandidusins, p-terphenyl derivatives. Within the pathway, ucdC catalyzes O-methylation of the terphenyl triol intermediate produced by ucdB to yield terphenyllin carrying two methoxy moieties at C-9 and C-12. The pathway begin with the biosynthesis of 4-hydroxyphenylpyruvate (HPPA) from L-tyrosine, possibly by the aminotransferase ucdG. The nonribosomal peptide synthetase ucdA then condenses two HPPA units to produce atromentin. The key step in this pathway is the reduction and dehydration of atromentin to form a terphenyl triol intermediate, performed by the NAD-dependent dehydrogenase ucdB. Further O-methylation by the methyltransferase ucdC forms terphenyllin carrying two methoxy moieties at C-9 and C-12, and subsequent dihydroxylation at C-3 of ring A and C-15 of ring C by the flavin-dependent oxygenase ucdD leads to 3,15-dihydroxyterphenyllin. Prenylation by ucdE at position C-5 of ring A forms usterphenyllin B, and is followed by a second prenylation at position C-14 of ring C to form usterphenyllin A. The following furan ring formation that leads to uscandidusins A and B was proven to be an unexpected spontaneous non-enzymatic reaction. This is O-methyltransferase ucdC from Aspergillus ustus.